We begin with the raw amino-acid sequence, 417 residues long: Inner membrane transport protein YnfM (417 aa).

The segment at 1 to 22 (MSRTTTVDGAPASDTDKQSISQ) is disordered. Residues 1 to 38 (MSRTTTVDGAPASDTDKQSISQPNQFIKRGTPQFMRVT) lie on the Periplasmic side of the membrane. The chain crosses the membrane as a helical span at residues 39–59 (LALFSAGLATFALLYCVQPIL). The Cytoplasmic portion of the chain corresponds to 60–73 (PVLSQEFGLTPANS). Residues 74-94 (SISLSISTAMLAIGLLFTGPL) traverse the membrane as a helical segment. The Periplasmic segment spans residues 95–101 (SDAIGRK). A helical membrane pass occupies residues 102–122 (PVMVTALLLASICTLLSTMMT). Topologically, residues 123 to 125 (SWH) are cytoplasmic. Residues 126-146 (GILIMRALIGLSLSGVAAVGM) form a helical membrane-spanning segment. Residues 147-152 (TYLSEE) lie on the Periplasmic side of the membrane. Residues 153–173 (IHPSFVAFSMGLYISGNSIGG) form a helical membrane-spanning segment. At 174-190 (MSGRLISGVFTDFFNWR) the chain is on the cytoplasmic side. The chain crosses the membrane as a helical span at residues 191–211 (IALAAIGCFALASALMFWKIL). Residues 212 to 241 (PESRHFRPTSLRPKTLFINFRLHWRDRGLP) lie on the Periplasmic side of the membrane. Residues 242-262 (LLFAEGFLLMGSFVTLFNYIG) traverse the membrane as a helical segment. The Cytoplasmic segment spans residues 263 to 264 (YR). A helical membrane pass occupies residues 265 to 285 (LMLSPWHVSQAVVGLLSLAYL). Residues 286–315 (TGTWSSPKAGTMTTRYGRGPVMLFSTGVML) lie on the Periplasmic side of the membrane. A helical transmembrane segment spans residues 316–336 (FGLLMTLFSSLWLIFAGMLLF). Topologically, residues 337–364 (SAGFFAAHSVASSWIGPRAKRAKGQASS) are cytoplasmic. A helical membrane pass occupies residues 365–385 (LYLFSYYLGSSIAGTLGGVFW). Topologically, residues 386-387 (HN) are periplasmic. The helical transmembrane segment at 388-408 (YGWNGVGAFIALMLVIALLVG) threads the bilayer. Over 409–417 (TRLHRRLHA) the chain is Cytoplasmic.

This sequence belongs to the major facilitator superfamily.

Its subcellular location is the cell inner membrane. The protein is Inner membrane transport protein YnfM (ynfM) of Escherichia coli (strain K12).